The following is a 413-amino-acid chain: Serine/threonine transporter SstT (413 aa).

Helical transmembrane passes span 18 to 38 (LSLV…ALFA), 52 to 72 (FVSA…MASI), 86 to 106 (ILFL…IASM), 119 to 139 (IAVS…LSVV), 145 to 165 (ALMN…GVAI), 196 to 216 (LGIF…ALIG), 221 to 241 (LAVL…LIVF), 292 to 312 (VSIP…ITVL), 320 to 340 (LGIA…AICA), and 360 to 380 (LFGI…IIGV).

It belongs to the dicarboxylate/amino acid:cation symporter (DAACS) (TC 2.A.23) family.

Its subcellular location is the cell inner membrane. The enzyme catalyses L-serine(in) + Na(+)(in) = L-serine(out) + Na(+)(out). The catalysed reaction is L-threonine(in) + Na(+)(in) = L-threonine(out) + Na(+)(out). Involved in the import of serine and threonine into the cell, with the concomitant import of sodium (symport system). This chain is Serine/threonine transporter SstT, found in Pseudomonas fluorescens (strain Pf0-1).